A 106-amino-acid polypeptide reads, in one-letter code: UPF0145 protein azo0572 (106 aa).

The protein belongs to the UPF0145 family.

The polypeptide is UPF0145 protein azo0572 (Azoarcus sp. (strain BH72)).